We begin with the raw amino-acid sequence, 176 residues long: Inner membrane-spanning protein YciB (176 aa).

6 helical membrane-spanning segments follow: residues 3 to 23, 24 to 44, 49 to 69, 81 to 101, 121 to 141, and 149 to 169; these read FLFD…WGIF, TATA…AFRH, TMLW…LVLH, LYWL…NNLI, VAWA…VHNF, and FKLF…SLWL.

The protein belongs to the YciB family.

It is found in the cell inner membrane. Its function is as follows. Plays a role in cell envelope biogenesis, maintenance of cell envelope integrity and membrane homeostasis. The chain is Inner membrane-spanning protein YciB from Burkholderia vietnamiensis (strain G4 / LMG 22486) (Burkholderia cepacia (strain R1808)).